Consider the following 516-residue polypeptide: Circadian clock oscillator protein KaiC (516 aa).

KaiC domains follow at residues 1 to 244 (MNQP…INIF) and 258 to 516 (ARIS…TLPE). Glycine 46, threonine 47, glycine 48, lysine 49, threonine 50, leucine 51, serine 86, lysine 221, leucine 222, arginine 223, threonine 225, histidine 227, threonine 237, threonine 287, glycine 288, threonine 289, glycine 290, lysine 291, threonine 292, and leucine 293 together coordinate ATP. Threonine 50 contacts Mg(2+). Threonine 292 is a binding site for Mg(2+). Glutamate 315 is a binding site for Mg(2+). An ATP-binding site is contributed by tryptophan 328. Serine 428 bears the Phosphoserine; by autocatalysis mark. Position 429 is a phosphothreonine; by autocatalysis (threonine 429). ATP is bound by residues arginine 448, lysine 454, methionine 455, arginine 456, serine 458, histidine 460, and lysine 462.

Belongs to the KaiC family. As to quaternary structure, homohexamer; hexamerization is dependent on ATP-binding. The KaiABC complex composition changes during the circadian cycle to control KaiC phosphorylation. Complexes KaiC(6), KaiA(2-4):KaiC(6), KaiB(6):KaiC(6) and KaiC(6):KaiB(6):KaiA(12) are among the most important forms, many form cooperatively. KaiC interacts with SasA, activating its autokinase function and leading to RpaA activation. Mg(2+) serves as cofactor. Phosphorylated on serine and threonine residues by autocatalysis. Has a 4 step phosphorylation cycle; the autokinase acts first on Thr-429, then Ser-428. When Ser-428 is modified KaiC switches to an autophosphatase mode, acting first on phospho-Thr-429 then phospho-Ser-428.

It catalyses the reaction L-seryl-[protein] + ATP = O-phospho-L-seryl-[protein] + ADP + H(+). It carries out the reaction L-threonyl-[protein] + ATP = O-phospho-L-threonyl-[protein] + ADP + H(+). The enzyme catalyses ATP + H2O = ADP + phosphate + H(+). Its activity is regulated as follows. The interaction with KaiA enhances its phosphorylation status, while the interaction with KaiB decreases it. Functionally, central component of the KaiABC oscillator complex, which constitutes the main circadian regulator in cyanobacteria. Complex composition changes during the circadian cycle to control KaiC phosphorylation. KaiA stimulates KaiC autophosphorylation, while KaiB sequesters KaiA, leading to KaiC autodephosphorylation. Clock output pathways impact the RpaA transcriptional regulator. KaiC enhances the autophosphorylation activity of SasA, which then transfers its phosphate group to RpaA to activate it. KaiB and KaiC together enhance the phospho-RpaA dephosphatase activity of CikA. Its function is as follows. Has a weak, temperature-independent ATPase activity; ATPase activity defines the circadian period. The phosphorylation state of KaiC modulates its ATPase activity and effects KaiB binding. This Picosynechococcus sp. (strain ATCC 27264 / PCC 7002 / PR-6) (Agmenellum quadruplicatum) protein is Circadian clock oscillator protein KaiC.